The sequence spans 132 residues: Small ribosomal subunit protein eS24 (132 aa).

Residues 92-101 (LARHGLYEKK) show a composition bias toward basic and acidic residues. Residues 92-132 (LARHGLYEKKRPTRKQRKERKNRMKKVRGTKKSKVGAAAKK) form a disordered region. Over residues 102–132 (RPTRKQRKERKNRMKKVRGTKKSKVGAAAKK) the composition is skewed to basic residues.

The protein belongs to the eukaryotic ribosomal protein eS24 family.

The protein is Small ribosomal subunit protein eS24 (RpS24) of Spodoptera frugiperda (Fall armyworm).